The sequence spans 460 residues: GTPase Der (460 aa).

2 consecutive EngA-type G domains span residues 2–166 and 175–353; these read KTIA…AEER and TRIA…QERK. GTP contacts are provided by residues 8–15, 55–59, 118–121, 181–188, 228–232, and 293–296; these read GRPNVGKS, DTGGL, NKLD, GQPNAGKS, DTAGL, and NKID. The KH-like domain maps to 354–446; sequence KRIPTHRLTQ…LLWKWRKAEG (93 aa).

The protein belongs to the TRAFAC class TrmE-Era-EngA-EngB-Septin-like GTPase superfamily. EngA (Der) GTPase family. As to quaternary structure, associates with the 50S ribosomal subunit.

In terms of biological role, GTPase that plays an essential role in the late steps of ribosome biogenesis. The polypeptide is GTPase Der (Methylacidiphilum infernorum (isolate V4) (Methylokorus infernorum (strain V4))).